The primary structure comprises 321 residues: RNA/RNP complex-1-interacting phosphatase (321 aa).

Basic residues predominate over residues 1–11 (MNQHYGRHGRG). Residues 1 to 27 (MNQHYGRHGRGRGRDFAACAPPKKKGR) are disordered. Residues 60–207 (FEAKLMPEEC…LQKRHVRKNR (148 aa)) enclose the Tyrosine-protein phosphatase domain. The active-site Phosphocysteine intermediate is the Cys151. 152–157 (THGLNR) is a binding site for substrate. Arg157 (proton donor/acceptor) is an active-site residue. The disordered stretch occupies residues 205–262 (KNRNVSAPRTDGLEDSADPTEQVYTNNKPVKKKPRKNRRGGHLAPSQHFQHQTQSSPY). The span at 233–245 (PVKKKPRKNRRGG) shows a compositional bias: basic residues. The span at 251–262 (QHFQHQTQSSPY) shows a compositional bias: polar residues.

Belongs to the protein-tyrosine phosphatase family. Non-receptor class dual specificity subfamily. As to quaternary structure, monomer. May interact with SFRS7 and SFRS9/SRP30C.

The protein resides in the nucleus. The protein localises to the nucleus speckle. Its function is as follows. Possesses RNA 5'-triphosphatase and diphosphatase activities, but displays a poor protein-tyrosine phosphatase activity. In addition, has phosphatase activity with ATP, ADP and O-methylfluorescein phosphate (in vitro). Binds to RNA. May participate in nuclear mRNA metabolism. This is RNA/RNP complex-1-interacting phosphatase (Dusp11) from Mus musculus (Mouse).